The following is a 403-amino-acid chain: Imidazolonepropionase (403 aa).

Fe(3+) contacts are provided by His-68 and His-70. 2 residues coordinate Zn(2+): His-68 and His-70. Arg-77, Tyr-140, and His-173 together coordinate 4-imidazolone-5-propanoate. Tyr-140 contacts N-formimidoyl-L-glutamate. Residue His-238 participates in Fe(3+) binding. His-238 serves as a coordination point for Zn(2+). A 4-imidazolone-5-propanoate-binding site is contributed by Gln-241. A Fe(3+)-binding site is contributed by Asp-313. Residue Asp-313 coordinates Zn(2+). Residues Asn-315 and Gly-317 each coordinate N-formimidoyl-L-glutamate. Position 318 (Thr-318) interacts with 4-imidazolone-5-propanoate.

It belongs to the metallo-dependent hydrolases superfamily. HutI family. The cofactor is Zn(2+). It depends on Fe(3+) as a cofactor.

The protein localises to the cytoplasm. It catalyses the reaction 4-imidazolone-5-propanoate + H2O = N-formimidoyl-L-glutamate. Its pathway is amino-acid degradation; L-histidine degradation into L-glutamate; N-formimidoyl-L-glutamate from L-histidine: step 3/3. Functionally, catalyzes the hydrolytic cleavage of the carbon-nitrogen bond in imidazolone-5-propanoate to yield N-formimidoyl-L-glutamate. It is the third step in the universal histidine degradation pathway. This chain is Imidazolonepropionase, found in Psychromonas ingrahamii (strain DSM 17664 / CCUG 51855 / 37).